A 410-amino-acid chain; its full sequence is Transposase for insertion sequence element IS801 (410 aa).

Belongs to the transposase 32 family.

Its function is as follows. Involved in the transposition of the insertion sequence. The protein is Transposase for insertion sequence element IS801 of Pseudomonas savastanoi pv. phaseolicola (Pseudomonas syringae pv. phaseolicola).